We begin with the raw amino-acid sequence, 273 residues long: Large ribosomal subunit protein uL2 (273 aa).

2 disordered regions span residues 35–54 (DSKS…TRHI) and 222–273 (GMAM…RRNK). Over residues 39–49 (KSGGRNNNGRI) the composition is skewed to polar residues. A compositionally biased stretch (basic and acidic residues) spans 229–239 (DHPHGGGEGRN). Positions 253 to 273 (KGFKTRKNKRTDKYIVRRRNK) are enriched in basic residues.

It belongs to the universal ribosomal protein uL2 family. In terms of assembly, part of the 50S ribosomal subunit. Forms a bridge to the 30S subunit in the 70S ribosome.

Functionally, one of the primary rRNA binding proteins. Required for association of the 30S and 50S subunits to form the 70S ribosome, for tRNA binding and peptide bond formation. It has been suggested to have peptidyltransferase activity; this is somewhat controversial. Makes several contacts with the 16S rRNA in the 70S ribosome. The protein is Large ribosomal subunit protein uL2 of Aeromonas salmonicida (strain A449).